The chain runs to 96 residues: Putative pterin-4-alpha-carbinolamine dehydratase (96 aa).

This sequence belongs to the pterin-4-alpha-carbinolamine dehydratase family.

The catalysed reaction is (4aS,6R)-4a-hydroxy-L-erythro-5,6,7,8-tetrahydrobiopterin = (6R)-L-erythro-6,7-dihydrobiopterin + H2O. The protein is Putative pterin-4-alpha-carbinolamine dehydratase of Caulobacter sp. (strain K31).